An 891-amino-acid polypeptide reads, in one-letter code: Receptor-like protein 50 (891 aa).

The N-terminal stretch at M1–A22 is a signal peptide. The Extracellular segment spans residues K23 to W849. N62 and N98 each carry an N-linked (GlcNAc...) asparagine glycan. 7 LRR repeats span residues Q105 to Y130, R132 to L152, S153 to N176, L177 to L201, Y203 to L225, K226 to L249, and S250 to S272. Residue N200 is glycosylated (N-linked (GlcNAc...) asparagine). Residues N251, N285, and N306 are each glycosylated (N-linked (GlcNAc...) asparagine). LRR repeat units lie at residues L286–S309, L310–L334, S336–S358, and P359–L383. A glycan (N-linked (GlcNAc...) asparagine) is linked at N355. One copy of the LRR 12; degenerate repeat lies at V384 to Q407. LRR repeat units lie at residues L408–L436, L438–Q453, T454–L477, P478–F504, A506–V519, C520–N544, K545–G568, L570–C591, Y593–S614, L615–F641, S642–G665, F712–L736, K737–L760, S761–L784, and F786–S809. N422, N442, and N452 each carry an N-linked (GlcNAc...) asparagine glycan. Residues N531, N544, N554, N590, and N605 are each glycosylated (N-linked (GlcNAc...) asparagine). Residues N743 and N759 are each glycosylated (N-linked (GlcNAc...) asparagine). 2 N-linked (GlcNAc...) asparagine glycosylation sites follow: N791 and N811. A helical transmembrane segment spans residues V850–L870. At T871–K891 the chain is on the cytoplasmic side.

The protein belongs to the RLP family.

Its subcellular location is the cell membrane. The protein is Receptor-like protein 50 of Arabidopsis thaliana (Mouse-ear cress).